A 333-amino-acid polypeptide reads, in one-letter code: Ornithine carbamoyltransferase (333 aa).

Carbamoyl phosphate is bound by residues 56 to 59 (STRT), glutamine 83, arginine 107, and 134 to 137 (HPTQ). L-ornithine-binding positions include asparagine 167, aspartate 231, and 235–236 (SM). Carbamoyl phosphate-binding positions include 273–274 (CL) and arginine 318.

Belongs to the aspartate/ornithine carbamoyltransferase superfamily. OTCase family.

It localises to the cytoplasm. It carries out the reaction carbamoyl phosphate + L-ornithine = L-citrulline + phosphate + H(+). It functions in the pathway amino-acid biosynthesis; L-arginine biosynthesis; L-arginine from L-ornithine and carbamoyl phosphate: step 1/3. Functionally, reversibly catalyzes the transfer of the carbamoyl group from carbamoyl phosphate (CP) to the N(epsilon) atom of ornithine (ORN) to produce L-citrulline. This Staphylococcus aureus (strain MSSA476) protein is Ornithine carbamoyltransferase.